The sequence spans 216 residues: Ras-like protein (216 aa).

16–23 (GGGGVGKS) is a GTP binding site. The Effector region motif lies at 38-46 (YDPTIEDSY). GTP-binding positions include 63–67 (DTAGQ) and 122–125 (NKCD). Residues Cys-209 and Cys-210 are each lipidated (S-palmitoyl cysteine). Cys-213 is modified (cysteine methyl ester). Cys-213 is lipidated: S-geranylgeranyl cysteine. A propeptide spans 214–216 (VVL) (removed in mature form).

Belongs to the small GTPase superfamily. Ras family.

The protein localises to the cell membrane. It carries out the reaction GTP + H2O = GDP + phosphate + H(+). Alternates between an inactive form bound to GDP and an active form bound to GTP. Activated by a guanine nucleotide-exchange factor (GEF) and inactivated by a GTPase-activating protein (GAP). This chain is Ras-like protein (RAS1), found in Cryptococcus neoformans var. neoformans serotype D (strain B-3501A) (Filobasidiella neoformans).